Here is a 58-residue protein sequence, read N- to C-terminus: Alpha-conotoxin AuIB (58 aa).

The signal sequence occupies residues 1–16 (MFTVFLLVVLATTVVS). Residues 17–39 (FTSDRASDGRKDAASGLIALTMK) constitute a propeptide that is removed on maturation. Disulfide bonds link Cys-41/Cys-47 and Cys-42/Cys-54. Residue Cys-54 is modified to Cysteine amide.

In terms of tissue distribution, expressed by the venom duct.

The protein resides in the secreted. Functionally, alpha-conotoxins act on postsynaptic membranes, they bind to the nicotinic acetylcholine receptors (nAChR) and thus inhibit them. This toxin blocks mammalian nAChR alpha-3-beta-4/CHRNA3-CHRNB4 subunits. Also exhibits inhibition of D.melanogaster alpha-7/CHRNA7 nAChRs. This Conus aulicus (Princely cone) protein is Alpha-conotoxin AuIB.